Reading from the N-terminus, the 62-residue chain is uncharacterized protein (62 aa).

2 consecutive 4Fe-4S ferredoxin-type domains span residues 2 to 31 and 32 to 62; these read AVTI…EIEG and DKVV…VEPE. [4Fe-4S] cluster contacts are provided by Cys10, Cys15, Cys18, Cys22, Cys42, Cys45, Cys48, and Cys52.

[4Fe-4S] cluster is required as a cofactor.

This is an uncharacterized protein from Methanocaldococcus jannaschii (strain ATCC 43067 / DSM 2661 / JAL-1 / JCM 10045 / NBRC 100440) (Methanococcus jannaschii).